The primary structure comprises 90 residues: MDDSWILEVKVTPKAKENKIVGFDGQALKVRVTEPPEKGKANDAVISLLAKALSLPKRDVTLIAGETSRKKKFLLPNRVQDIIFSLHIDV.

This sequence belongs to the UPF0235 family.

The sequence is that of UPF0235 protein CPn_0497/CP_0257/CPj0497/CpB0517 from Chlamydia pneumoniae (Chlamydophila pneumoniae).